The primary structure comprises 167 residues: MSNLWRNLKSVRLPFRRAPTLPLYNVPVRRSISSSSSIPPSSSPPPRLTITQRVKELTKKYGWWSLGVYIGISVLDFSASFVLVRTLGAERIGYLEHSILNSIRRYFNWEIPESTASGEPEAYHSSIWTELAFAYGIHKALVVARVPLTAAIVPPLAKRFRGPRIRP.

The protein to A.thaliana At2g20940.

This is an uncharacterized protein from Schizosaccharomyces pombe (strain 972 / ATCC 24843) (Fission yeast).